An 82-amino-acid polypeptide reads, in one-letter code: MFNMENTAKEEKNSQPLLDLEQDMQDHDRAQELKASVQDKVHKLHALLREGSDKESFGQQQSLLAGYVALQKVLGRINRKMI.

This sequence belongs to the chlamydial CPn_0711/CT_665/TC_0036 family.

This is an uncharacterized protein from Chlamydia pneumoniae (Chlamydophila pneumoniae).